A 118-amino-acid chain; its full sequence is Thioredoxin-like protein CXXS1 (118 aa).

Residues 2-110 form the Thioredoxin domain; that stretch reads ARVVKIDSAE…IKKRVDGFVQ (109 aa).

It belongs to the thioredoxin family. In terms of tissue distribution, ubiquitous.

It is found in the cytoplasm. Its function is as follows. Possesses low disulfide reductase activity, but efficient protein disulfide isomerase activity. Does not possess deglutathionylation activity. The polypeptide is Thioredoxin-like protein CXXS1 (CXXS1) (Arabidopsis thaliana (Mouse-ear cress)).